A 569-amino-acid polypeptide reads, in one-letter code: CTP synthase (569 aa).

The segment at 1–276 (MNQATPTKHV…DAYLVRRLDL (276 aa)) is amidoligase domain. Ser18 serves as a coordination point for CTP. Ser18 provides a ligand contact to UTP. Residues 19–24 (SLGKGL) and Asp76 each bind ATP. Mg(2+) contacts are provided by Asp76 and Glu150. CTP-binding positions include 157–159 (DIE), 197–202 (KTKPTQ), and Lys233. Residues 197–202 (KTKPTQ) and Lys233 contribute to the UTP site. The 250-residue stretch at 301–550 (TVALVGKYVD…VGAAIERQRE (250 aa)) folds into the Glutamine amidotransferase type-1 domain. Gly364 is an L-glutamine binding site. Cys391 serves as the catalytic Nucleophile; for glutamine hydrolysis. Residues 392–395 (LGLQ), Glu415, and Arg476 each bind L-glutamine. Active-site residues include His523 and Glu525.

This sequence belongs to the CTP synthase family. In terms of assembly, homotetramer.

It carries out the reaction UTP + L-glutamine + ATP + H2O = CTP + L-glutamate + ADP + phosphate + 2 H(+). The catalysed reaction is L-glutamine + H2O = L-glutamate + NH4(+). It catalyses the reaction UTP + NH4(+) + ATP = CTP + ADP + phosphate + 2 H(+). It functions in the pathway pyrimidine metabolism; CTP biosynthesis via de novo pathway; CTP from UDP: step 2/2. Its activity is regulated as follows. Allosterically activated by GTP, when glutamine is the substrate; GTP has no effect on the reaction when ammonia is the substrate. The allosteric effector GTP functions by stabilizing the protein conformation that binds the tetrahedral intermediate(s) formed during glutamine hydrolysis. Inhibited by the product CTP, via allosteric rather than competitive inhibition. Functionally, catalyzes the ATP-dependent amination of UTP to CTP with either L-glutamine or ammonia as the source of nitrogen. Regulates intracellular CTP levels through interactions with the four ribonucleotide triphosphates. This chain is CTP synthase, found in Nocardioides sp. (strain ATCC BAA-499 / JS614).